The sequence spans 311 residues: Aspartate carbamoyltransferase catalytic subunit (311 aa).

Carbamoyl phosphate is bound by residues R55 and T56. K85 provides a ligand contact to L-aspartate. 3 residues coordinate carbamoyl phosphate: R106, H135, and Q138. Positions 168 and 230 each coordinate L-aspartate. The carbamoyl phosphate site is built by L268 and P269.

Belongs to the aspartate/ornithine carbamoyltransferase superfamily. ATCase family. As to quaternary structure, heterododecamer (2C3:3R2) of six catalytic PyrB chains organized as two trimers (C3), and six regulatory PyrI chains organized as three dimers (R2).

The enzyme catalyses carbamoyl phosphate + L-aspartate = N-carbamoyl-L-aspartate + phosphate + H(+). Its pathway is pyrimidine metabolism; UMP biosynthesis via de novo pathway; (S)-dihydroorotate from bicarbonate: step 2/3. In terms of biological role, catalyzes the condensation of carbamoyl phosphate and aspartate to form carbamoyl aspartate and inorganic phosphate, the committed step in the de novo pyrimidine nucleotide biosynthesis pathway. The sequence is that of Aspartate carbamoyltransferase catalytic subunit from Cronobacter sakazakii (strain ATCC BAA-894) (Enterobacter sakazakii).